A 125-amino-acid chain; its full sequence is MKKSAPLFLGIIFLTLTGVQGVPAIRNGRCSCINTSQGMIHPKSLKDLKQFAPSPSCEKTEIIATMKNGNEACLNPDLPEVKELIKEWEKQVNQKKKQRKGKKYKKTKKVPKVKRSQRPSQKKTT.

The first 21 residues, 1–21, serve as a signal peptide directing secretion; sequence MKKSAPLFLGIIFLTLTGVQG. 2 cysteine pairs are disulfide-bonded: cysteine 30/cysteine 57 and cysteine 32/cysteine 73. The segment at 91 to 125 is disordered; the sequence is QVNQKKKQRKGKKYKKTKKVPKVKRSQRPSQKKTT. Basic residues predominate over residues 93–125; that stretch reads NQKKKQRKGKKYKKTKKVPKVKRSQRPSQKKTT.

The protein belongs to the intercrine alpha (chemokine CxC) family.

It localises to the secreted. In terms of biological role, cytokine that affects the growth, movement, or activation state of cells that participate in immune and inflammatory response. Chemotactic for activated T-cells. Binds to CXCR3. This Bos taurus (Bovine) protein is C-X-C motif chemokine 9 (CXCL9).